The primary structure comprises 113 residues: U11-theraphotoxin-Hhn1a (113 aa).

The first 21 residues, 1 to 21 (MNTVRVTFLLVFVLAVSLGQA), serve as a signal peptide directing secretion. Positions 22–74 (DKDENRMEMQKKTEQGKSYLDFAENLLLQKLEELEAKLLEEDSEESRNSRQKR) are excised as a propeptide. Disulfide bonds link cysteine 75/cysteine 90, cysteine 82/cysteine 95, and cysteine 89/cysteine 110.

Belongs to the neurotoxin 14 (magi-1) family. 01 (HNTX-16) subfamily. Expressed by the venom gland.

It localises to the secreted. Probable ion channel inhibitor. In Cyriopagopus hainanus (Chinese bird spider), this protein is U11-theraphotoxin-Hhn1a.